The sequence spans 129 residues: Vacuolar transporter chaperone complex subunit 1 (129 aa).

The residue at position 2 (Ser2) is an N-acetylserine. Topologically, residues 2–32 (SSAPLLQRTPGKKIALPTRVEPKVFFANERT) are cytoplasmic. A helical transmembrane segment spans residues 33–53 (FLSWLNFTVMLGGLGVGLLNF). At 54–59 (GDKIGR) the chain is on the vacuolar side. The chain crosses the membrane as a helical span at residues 60–80 (VSAGLFTFVAMGTMIYALVTY). The Cytoplasmic segment spans residues 81–98 (HWRAAAIRRRGSGPYDDR). Residues 99–119 (LGPTLLCFFLLVAVIINFILR) traverse the membrane as a helical segment. At 120–129 (LKYNDANTKL) the chain is on the vacuolar side.

Belongs to the VTC1 family. In terms of assembly, the VTC core complex is an integral membrane heterooligomer composed of the catalytic subunit VTC4 and the accessory subunits VTC1, VTC2 and VTC3. The complex exists in 2 different sub-complexes: VTC1-VTC2-VCT4 and VCT1-VTC3-VTC4. The VCT1-VTC3-VTC4 subcomplex is mostly found on the vacuolar membrane. The VTC1-VTC2-VCT4 subcomplex is observed in the cell periphery, probably ER and nuclear envelope, but localizes to the vacuole under phosphate starvation. Each subunit contains 3 transmembrane helices. VTC1 is a small membrane protein without hydrophilic domain. VTC2, VTC3 and VTC4 are related and have 2 hydrophilic domains that face the cytosol, an N-terminal SPX domain and the central core domain. The central core in VTC4 is the catalytic domain, with the essential catalytic lysine replaced by isoleucine and leucine in VTC2 and VTC3, respectively. The core complex associates with the accessory subunit VTC5. The complex interacts with the v-SNARE NYV1 and with the V(0) subunit of V-ATPase VPH1.

The protein resides in the vacuole membrane. It is found in the cytoplasm. The protein localises to the cell cortex. It localises to the endoplasmic reticulum membrane. Its subcellular location is the cytoplasmic vesicle. The protein resides in the autophagosome membrane. In terms of biological role, accessory subunit of the vacuolar transporter chaperone (VTC) complex. The VTC complex acts as a vacuolar polyphosphate polymerase that catalyzes the synthesis of inorganic polyphosphate (polyP) via transfer of phosphate from ATP to a growing polyP chain, releasing ADP. VTC exposes its catalytic domain VTC4 to the cytosol, where the growing polyP chain winds through a tunnel-shaped pocket, integrating cytoplasmic polymer synthesis with polyP membrane translocation. The VTC complex carries 9 vacuolar transmembrane domains, which are likely to constitute the translocation channel into the organelle lumen. PolyP synthesis is tightly coupled to its transport into the vacuole lumen, in order to avoid otherwise toxic intermediates in the cytosol, and it depends on the proton gradient across the membrane, formed by V-ATPase. VTC1 contributes only 3 transmembrane domains to the complex. The VTC complex also plays a role in vacuolar membrane fusion. Required for SEC18/NSF activity in SNARE priming, membrane binding of LMA1 and V(0) trans-complex formation. The sequence is that of Vacuolar transporter chaperone complex subunit 1 from Saccharomyces cerevisiae (strain ATCC 204508 / S288c) (Baker's yeast).